Reading from the N-terminus, the 140-residue chain is Low calcium response locus protein T (140 aa).

The chain is Low calcium response locus protein T (lcrT) from Yersinia pseudotuberculosis serotype I (strain IP32953).